A 62-amino-acid polypeptide reads, in one-letter code: Delta-theraphotoxin-Cg1a 3 (62 aa).

Residues 1 to 21 (MKTSILFVIFSLALVFALSPA) form the signal peptide. Positions 22 to 29 (TEIEETDR) are excised as a propeptide. Cystine bridges form between cysteine 31–cysteine 46, cysteine 38–cysteine 51, and cysteine 45–cysteine 58.

It belongs to the neurotoxin 10 (Hwtx-1) family. 33 (Jztx-1) subfamily. In terms of tissue distribution, expressed by the venom gland.

The protein resides in the secreted. Moderately inhibits voltage-gated sodium channels and weakly inhibits voltage-gated potassium channel. Inhibits the inactivation of rat Nav1.2/SCN2A (IC(50)=870 nM), rat Nav1.3/SCN3A (IC(50)=845 nM), rat Nav1.4/SCN4A (IC(50)=339 nM), human Nav1.5/SCN5A (IC(50)=335 nM) and human Nav1.7/SCN9A sodium channels (IC(50)=348 nM). The toxin delays the inactivation of sodium channels without affecting the activation and steady-state inactivation kinetics in the physiological range of voltages. Site-directed mutagenesis of the sodium channel indicates that the toxin interacts with site 3 located at the extracellular S3-S4 linker of domain IV. On potassium channels, it inhibits activation of channels with an IC(50) of 8.05 uM through a voltage sensor-trapping mechanism. It increases muscle contraction in several assays (mouse phrenic nerve-diaphragm, toad heart, rat vas deferens) and is suggested to act both presynaptically and postsynaptically. This chain is Delta-theraphotoxin-Cg1a 3, found in Chilobrachys guangxiensis (Chinese earth tiger tarantula).